The primary structure comprises 489 residues: Glutamate--tRNA ligase (489 aa).

The 'HIGH' region motif lies at 11 to 21 (PSPTGHLHIGN). A 'KMSKS' region motif is present at residues 252 to 256 (KLSKR). An ATP-binding site is contributed by Lys-255.

Belongs to the class-I aminoacyl-tRNA synthetase family. Glutamate--tRNA ligase type 1 subfamily. Monomer.

The protein localises to the cytoplasm. The catalysed reaction is tRNA(Glu) + L-glutamate + ATP = L-glutamyl-tRNA(Glu) + AMP + diphosphate. Its function is as follows. Catalyzes the attachment of glutamate to tRNA(Glu) in a two-step reaction: glutamate is first activated by ATP to form Glu-AMP and then transferred to the acceptor end of tRNA(Glu). The chain is Glutamate--tRNA ligase from Oceanobacillus iheyensis (strain DSM 14371 / CIP 107618 / JCM 11309 / KCTC 3954 / HTE831).